We begin with the raw amino-acid sequence, 120 residues long: Large ribosomal subunit protein uL18 (120 aa).

The protein belongs to the universal ribosomal protein uL18 family. Part of the 50S ribosomal subunit; part of the 5S rRNA/L5/L18/L25 subcomplex. Contacts the 5S and 23S rRNAs.

In terms of biological role, this is one of the proteins that bind and probably mediate the attachment of the 5S RNA into the large ribosomal subunit, where it forms part of the central protuberance. The chain is Large ribosomal subunit protein uL18 from Geobacillus thermodenitrificans (strain NG80-2).